We begin with the raw amino-acid sequence, 78 residues long: RTX-VII (78 aa).

The N-terminal stretch at 1 to 22 (MKTIVYLIVSILLLSSTVLVLA) is a signal peptide. A propeptide spanning residues 23 to 40 (EGNAASHELQEYPIEEQR) is cleaved from the precursor. 4 disulfides stabilise this stretch: Cys-42–Cys-58, Cys-47–Cys-63, Cys-57–Cys-73, and Cys-65–Cys-71. An Arginine amide modification is found at Arg-76.

As to expression, expressed by the venom gland.

It localises to the secreted. In terms of biological role, agonist of rat Nav1.3/SCN3A. This toxin increases the peak current amplitude, and potently inhibits the fast inactivation of the channel (EC(50)=120 nM). The inhibition of fast inactivation is voltage-independent (depolarizing voltages ranging from 220 mV to 130 mV). The toxin might bind to the domain IV of the Nav1.3 channel, while domain II might not participate in interacting with the toxin but could determine the efficacy of RTX-VII. In vivo, when intracerebroventricularly injected into mice, the toxin causes involuntary body twitching (seizure-like symptoms). The chain is RTX-VII from Macrothele raveni (Funnel-web spider).